Here is a 219-residue protein sequence, read N- to C-terminus: Leukocyte surface antigen CD53 (219 aa).

At 1–11 (MGMSSLKLLKF) the chain is on the cytoplasmic side. A helical membrane pass occupies residues 12 to 32 (VLFFFNLIFWFCGCCILGLGI). Topologically, residues 33–54 (YLLIHSKFGVLFHNLPSLTLGN) are extracellular. The helical transmembrane segment at 55 to 69 (VLVIVGSVIMVVAFL) threads the bilayer. Topologically, residues 70 to 80 (GCMGSIKENKC) are cytoplasmic. A helical membrane pass occupies residues 81–106 (LLMSFFVLLLIILLAEVTLAILLFVY). Residues 107 to 181 (EQKLKEYVAE…IQAKQWFHSN (75 aa)) lie on the Extracellular side of the membrane. 2 N-linked (GlcNAc...) asparagine glycosylation sites follow: Asn-129 and Asn-148. A helical membrane pass occupies residues 182–206 (FLYIGITTICVCVIQVLGMSFALTL). The Cytoplasmic segment spans residues 207–219 (NCQIDKTSQVLGL).

It belongs to the tetraspanin (TM4SF) family. As to quaternary structure, interacts with SCIMP. Interacts with CD45/PTPRC. Interacts with IL7R. Interacts with RBL2 and PPP2CA.

The protein localises to the cell membrane. It is found in the cell junction. The protein resides in the membrane. Its subcellular location is the synapse. In terms of biological role, structural component of specialized membrane microdomains known as tetraspanin-enriched microdomains (TERMs), which act as platforms for receptor clustering and signaling. Participates thereby in diverse biological functions such as cell signal transduction, adhesion, migration and protein trafficking. Plays a role in the activation of monocytes and B-cells. Acts as an essential regulator of B-cell development by promoting interleukin-7 receptor/IL7R signaling. Also promotes, in B-cells, the BCR signaling by recruiting PKC to the plasma membrane in order to phosphorylate its substrates. Plays an essential role in B- and T-cells homing to lymph nodes by stabilizing L-selectin/SELL cell surface expression. Also mediates metabolic and inflammatory functions in hepatocytes and adipose tissue by promoting TNF-alpha and LPS signaling independent of the immune compartment. The protein is Leukocyte surface antigen CD53 (CD53) of Bos taurus (Bovine).